We begin with the raw amino-acid sequence, 487 residues long: Bifunctional cytokinin biosynthesis protein (487 aa).

Residues 1–266 form an adenylate isopentenyltransferase region; it reads MESTNRFMIG…RMASDFCYAS (266 aa). Residues 267–487 are cytokinin riboside 5'-monophosphate phosphoribohydrolase; the sequence is TSISFHPINE…FSRKGELEWV (221 aa). Residues Glu352, 380–381, 403–409, and Thr415 contribute to the substrate site; these read RK and GYGTLEE.

This sequence in the N-terminal section; belongs to the IPP transferase family. In the C-terminal section; belongs to the LOG family.

It catalyses the reaction dimethylallyl diphosphate + AMP = N(6)-(dimethylallyl)adenosine 5'-phosphate + diphosphate. The catalysed reaction is N(6)-(dimethylallyl)adenosine 5'-phosphate + H2O = N(6)-dimethylallyladenine + D-ribose 5-phosphate. It carries out the reaction 9-ribosyl-trans-zeatin 5'-phosphate + H2O = trans-zeatin + D-ribose 5-phosphate. It functions in the pathway secondary metabolite biosynthesis. Bifunctional cytokinin synthesis protein; part of the gene cluster that mediates the biosynthesis of cytokinins such as fusatin, fusatinic acids or 8-oxofusatin, known for their growth promoting and anti-senescence activities toward host plants. FCK1 is a bifunctional enzyme that performs the first steps in the biosynthesis of Fusarium cytokinins. It first condenses adenosine monophosphate (AMP) with dimethylallyl diphosphate (DMAPP) to yield isoprenyl adenosine monophosphate. It then catalyzes the removal of the phosphoribose to produce isopentenylaldehyde. The cytochrome P450 monooxygenase then converts isopentenylaldehyde to trans-zeatin. A condensation step converts trans-zeatin to fusatin which is further modified to produce fusatinic acid. The mechanism for oxidation of fusatin to fusatinic acid remains unknown. 8-oxofusatin could be produced through several pathways, via direct oxygenation of fusatin, or via the 8-oxo-pentenyladenine intermediate which itself must arise from either the prenylation of 8-oxo-AMP by FCK1 and/or oxygenation of isopentenylaldehyde. Both the FCK3 and FCK4 enzymes act downstream of the identified cytokinins to produce yet unidentified compounds. This Fusarium pseudograminearum (strain CS3096) (Wheat and barley crown-rot fungus) protein is Bifunctional cytokinin biosynthesis protein.